Reading from the N-terminus, the 512-residue chain is Zinc metalloprotease mde10 (512 aa).

Residues 1–15 (MRLVLLFSCVLAVSS) form the signal peptide. N-linked (GlcNAc...) asparagine glycosylation is present at Asn-35. Residues 65–306 (QTLWIGVVAD…KYVSLSCLSK (242 aa)) enclose the Peptidase M12B domain. A Zn(2+)-binding site is contributed by His-229. Glu-230 is a catalytic residue. Zn(2+) is bound by residues His-233 and His-239. 2 disulfide bridges follow: Cys-246–Cys-254 and Cys-374–Cys-394. A Disintegrin domain is found at 315-402 (LGTCGNGIVE…KCPVDENWDD (88 aa)). A glycan (N-linked (GlcNAc...) asparagine) is linked at Asn-432.

It depends on Zn(2+) as a cofactor. Glycosylated.

The protein localises to the endoplasmic reticulum. It is found in the spore wall. Its function is as follows. Has a role in the development of the spore envelope. The polypeptide is Zinc metalloprotease mde10 (mde10) (Schizosaccharomyces pombe (strain 972 / ATCC 24843) (Fission yeast)).